A 590-amino-acid chain; its full sequence is L-gulonolactone oxidase 5 (590 aa).

A signal peptide spans 1-31 (MAFGYSPSYCSFWRTLLGLYCLFTLVHTVIS). The FAD-binding PCMH-type domain occupies 60 to 242 (STCRAANVAY…SQVTFELQPM (183 aa)).

This sequence belongs to the oxygen-dependent FAD-linked oxidoreductase family. It depends on FAD as a cofactor.

The catalysed reaction is L-gulono-1,4-lactone + O2 = L-ascorbate + H2O2 + H(+). It functions in the pathway cofactor biosynthesis; L-ascorbate biosynthesis. Catalyzes the oxidation of L-gulono-1,4-lactone to ascorbic acid. L-gulono-1,4-lactone is oxidized to hydrogen peroxide and L-xylo-hexulonolactone which spontaneously isomerizes to L-ascorbate. The protein is L-gulonolactone oxidase 5 of Arabidopsis thaliana (Mouse-ear cress).